The chain runs to 124 residues: Ribonuclease pancreatic (124 aa).

The segment covering 1-13 has biased composition (basic and acidic residues); that stretch reads KETAAAKFERQHM. Positions 1-25 are disordered; sequence KETAAAKFERQHMDSSTSSASSSNY. Residues Lys7 and Arg10 each coordinate substrate. His12 (proton acceptor) is an active-site residue. 4 disulfides stabilise this stretch: Cys26–Cys84, Cys40–Cys95, Cys58–Cys110, and Cys65–Cys72. Residues 41–45, Lys66, and Arg85 contribute to the substrate site; that span reads KPVNT. Residue His119 is the Proton donor of the active site.

It belongs to the pancreatic ribonuclease family. Monomer. Interacts with and forms tight 1:1 complexes with RNH1. Dimerization of two such complexes may occur. Interaction with RNH1 inhibits this protein. As to expression, pancreas.

The protein resides in the secreted. It catalyses the reaction an [RNA] containing cytidine + H2O = an [RNA]-3'-cytidine-3'-phosphate + a 5'-hydroxy-ribonucleotide-3'-[RNA].. It carries out the reaction an [RNA] containing uridine + H2O = an [RNA]-3'-uridine-3'-phosphate + a 5'-hydroxy-ribonucleotide-3'-[RNA].. In terms of biological role, endonuclease that catalyzes the cleavage of RNA on the 3' side of pyrimidine nucleotides. Acts on single-stranded and double-stranded RNA. The sequence is that of Ribonuclease pancreatic (RNASE1) from Tragelaphus oryx (Eland).